Consider the following 1000-residue polypeptide: C2 domain-containing protein 5 (1000 aa).

One can recognise a C2 domain in the interval 1 to 109; the sequence is MPGKLKVKIV…EAATVISGWF (109 aa). Ca(2+)-binding residues include aspartate 19, aspartate 26, aspartate 76, aspartate 78, serine 81, and aspartate 84. Serine 197 carries the phosphoserine; by PKB/AKT2 modification. Phosphoserine occurs at positions 200 and 260. The segment at 265–330 is disordered; that stretch reads MKEIPFNEDP…SGSAGKEGGP (66 aa). Positions 274 to 289 are enriched in polar residues; sequence PNPNTHSSGPSTPLKN. Residues 290-318 are compositionally biased toward low complexity; that stretch reads QTYSFSPSKSYSRQSSSSDTDLSLTPKTG. Phosphoserine occurs at positions 293, 295, 304, 305, and 306. A Phosphothreonine modification is found at threonine 317. Gly residues predominate over residues 319–328; the sequence is MGSGSAGKEG. Phosphoserine is present on serine 323. Phosphothreonine is present on threonine 601. A disordered region spans residues 639-669; that stretch reads EIIGSPIPEPRQRSRLLRSQSESSDEVTELD. Phosphoserine occurs at positions 643, 657, 659, 661, and 662. The residue at position 666 (threonine 666) is a Phosphothreonine. Position 671 is a phosphoserine (serine 671). A Phosphothreonine modification is found at threonine 807. Residues serine 817 and serine 852 each carry the phosphoserine modification.

Ca(2+) serves as cofactor. Post-translationally, phosphorylated on Ser-197 by active myristoylated kinase AKT2; insulin-stimulated phosphorylation by AKT2 regulates SLC2A4/GLUT4 translocation into the plasma membrane.

It is found in the cytoplasmic vesicle membrane. The protein localises to the cytoplasm. Its subcellular location is the cell cortex. The protein resides in the cell membrane. It localises to the cell projection. It is found in the ruffle. Its function is as follows. Required for insulin-stimulated glucose transport and glucose transporter SLC2A4/GLUT4 translocation from intracellular glucose storage vesicle (GSV) to the plasma membrane (PM) in adipocytes. Binds phospholipid membranes in a calcium-dependent manner and is necessary for the optimal membrane fusion between SLC2A4/GLUT4 GSV and the PM. The chain is C2 domain-containing protein 5 (C2CD5) from Homo sapiens (Human).